Reading from the N-terminus, the 227-residue chain is Cytidylate kinase (227 aa).

10 to 18 serves as a coordination point for ATP; the sequence is GPSGSGKGT.

This sequence belongs to the cytidylate kinase family. Type 1 subfamily.

The protein localises to the cytoplasm. The enzyme catalyses CMP + ATP = CDP + ADP. It carries out the reaction dCMP + ATP = dCDP + ADP. The chain is Cytidylate kinase from Acinetobacter baylyi (strain ATCC 33305 / BD413 / ADP1).